The sequence spans 146 residues: Hemoglobin subunit beta-1 (146 aa).

Residues 2–146 form the Globin domain; sequence HWTAEEKQLI…VSHSLARRYH (145 aa). Positions 63 and 92 each coordinate heme b.

It belongs to the globin family. In terms of assembly, the major hemoglobin component (HbIII) is a tetramer of two alpha-2 chains and two beta-1 chains. As to expression, red blood cells.

Involved in oxygen transport from the lung to the various peripheral tissues. This Varanus albigularis (White-throated monitor) protein is Hemoglobin subunit beta-1 (HBB1).